We begin with the raw amino-acid sequence, 392 residues long: Formate-dependent phosphoribosylglycinamide formyltransferase (392 aa).

N(1)-(5-phospho-beta-D-ribosyl)glycinamide contacts are provided by residues 12–13 and Glu-72; that span reads EL. Residues Arg-104, Lys-145, 150–155, 185–188, and Glu-193 each bind ATP; these read SSGKGQ and EAFV. The region spanning 109–300 is the ATP-grasp domain; that stretch reads DLAARDLGLR…EFELHARAVL (192 aa). Residues Glu-258 and Glu-270 each coordinate Mg(2+). N(1)-(5-phospho-beta-D-ribosyl)glycinamide-binding positions include Asp-277, Lys-348, and 355–356; that span reads RR.

It belongs to the PurK/PurT family. In terms of assembly, homodimer.

The enzyme catalyses N(1)-(5-phospho-beta-D-ribosyl)glycinamide + formate + ATP = N(2)-formyl-N(1)-(5-phospho-beta-D-ribosyl)glycinamide + ADP + phosphate + H(+). Its pathway is purine metabolism; IMP biosynthesis via de novo pathway; N(2)-formyl-N(1)-(5-phospho-D-ribosyl)glycinamide from N(1)-(5-phospho-D-ribosyl)glycinamide (formate route): step 1/1. Involved in the de novo purine biosynthesis. Catalyzes the transfer of formate to 5-phospho-ribosyl-glycinamide (GAR), producing 5-phospho-ribosyl-N-formylglycinamide (FGAR). Formate is provided by PurU via hydrolysis of 10-formyl-tetrahydrofolate. The protein is Formate-dependent phosphoribosylglycinamide formyltransferase of Chlorobaculum tepidum (strain ATCC 49652 / DSM 12025 / NBRC 103806 / TLS) (Chlorobium tepidum).